The primary structure comprises 899 residues: Translation initiation factor IF-2 (899 aa).

Disordered stretches follow at residues 94–167 (TFTK…VVVK) and 259–309 (FNQE…HGFE). A compositionally biased stretch (basic and acidic residues) spans 107–121 (AKARQETEERTRPQE). Low complexity predominate over residues 147 to 164 (RAAQQKETAKTTSTTTEV). The tr-type G domain maps to 399–568 (TRPPVVTIMG…LIQSELMELK (170 aa)). The G1 stretch occupies residues 408–415 (GHVDHGKT). 408–415 (GHVDHGKT) lines the GTP pocket. The G2 stretch occupies residues 433 to 437 (GITQH). The interval 454 to 457 (DTPG) is G3. GTP contacts are provided by residues 454-458 (DTPGH) and 508-511 (NKMD). The interval 508–511 (NKMD) is G4. The segment at 544 to 546 (SAH) is G5.

The protein belongs to the TRAFAC class translation factor GTPase superfamily. Classic translation factor GTPase family. IF-2 subfamily.

The protein resides in the cytoplasm. One of the essential components for the initiation of protein synthesis. Protects formylmethionyl-tRNA from spontaneous hydrolysis and promotes its binding to the 30S ribosomal subunits. Also involved in the hydrolysis of GTP during the formation of the 70S ribosomal complex. The polypeptide is Translation initiation factor IF-2 (Acinetobacter baylyi (strain ATCC 33305 / BD413 / ADP1)).